The sequence spans 310 residues: MKGLVIKNTGSWYQVKTDDGQFIECKIKGNFRLKGIRSTNPVAVGDRVQIILNQEGTAFINEIEDRKNYIIRRSSNLSKQSHILAANLDQCMLVVTVNYPETSTIFIDRFLASAEAYRVPVKLVFNKVDAYNEDELRYLDALINLYTHIGYPCFKVSAKEGTGVDAIKKDLEGKITLFSGHSGVGKSTLINAILPGTKVKTGEISTYHNKGMHTTTFSEMFSVDGDGYIIDTPGIKGFGTFDMEEEEIGHYFPEIFKVSADCKYGNCTHRHEPGCAVREAVEKHLISESRYTSYLNMLEDKEEGKYRAAY.

Residues 77–238 (LSKQSHILAA…IIDTPGIKGF (162 aa)) enclose the CP-type G domain. Residues 126-129 (NKVD) and 180-188 (GHSGVGKST) contribute to the GTP site. Cys262, Cys267, His269, and Cys275 together coordinate Zn(2+).

Belongs to the TRAFAC class YlqF/YawG GTPase family. RsgA subfamily. In terms of assembly, monomer. Associates with 30S ribosomal subunit, binds 16S rRNA. Zn(2+) serves as cofactor.

It is found in the cytoplasm. Functionally, one of several proteins that assist in the late maturation steps of the functional core of the 30S ribosomal subunit. Helps release RbfA from mature subunits. May play a role in the assembly of ribosomal proteins into the subunit. Circularly permuted GTPase that catalyzes slow GTP hydrolysis, GTPase activity is stimulated by the 30S ribosomal subunit. The protein is Small ribosomal subunit biogenesis GTPase RsgA 2 of Bacteroides thetaiotaomicron (strain ATCC 29148 / DSM 2079 / JCM 5827 / CCUG 10774 / NCTC 10582 / VPI-5482 / E50).